A 497-amino-acid chain; its full sequence is 3-octaprenyl-4-hydroxybenzoate carboxy-lyase (497 aa).

N175 is a binding site for Mn(2+). Residues 178-180 (IYR), 192-194 (RWL), and 197-198 (RG) contribute to the prenylated FMN site. Mn(2+) is bound at residue E241. D290 serves as the catalytic Proton donor.

This sequence belongs to the UbiD family. In terms of assembly, homohexamer. Requires prenylated FMN as cofactor. Mn(2+) serves as cofactor.

It is found in the cell membrane. It catalyses the reaction a 4-hydroxy-3-(all-trans-polyprenyl)benzoate + H(+) = a 2-(all-trans-polyprenyl)phenol + CO2. Its pathway is cofactor biosynthesis; ubiquinone biosynthesis. In terms of biological role, catalyzes the decarboxylation of 3-octaprenyl-4-hydroxy benzoate to 2-octaprenylphenol, an intermediate step in ubiquinone biosynthesis. This chain is 3-octaprenyl-4-hydroxybenzoate carboxy-lyase, found in Escherichia coli O157:H7.